Here is a 443-residue protein sequence, read N- to C-terminus: Ribitol-5-phosphate xylosyltransferase 1 (443 aa).

Residues 1–9 (MRLTRKRLC) lie on the Cytoplasmic side of the membrane. A helical; Signal-anchor for type II membrane protein membrane pass occupies residues 10–30 (SFLIALYCLFSLYAAYHVFFG). Topologically, residues 31–443 (RRRQAPAGSP…ESSFLMNNKS (413 aa)) are extracellular. Positions 35 to 76 (APAGSPRGLRKGAAPARERRGREQSTLESEEWNPWEGDEKNE) are disordered. Basic and acidic residues predominate over residues 50–59 (ARERRGREQS).

It belongs to the RXYLT1 family. In terms of assembly, forms a complex composed of FKTN/fukutin, FKRP and RXYLT1/TMEM5.

Its subcellular location is the golgi apparatus membrane. The catalysed reaction is 3-O-[Rib-ol-P-Rib-ol-P-3-beta-D-GalNAc-(1-&gt;3)-beta-D-GlcNAc-(1-&gt;4)-(O-6-P-alpha-D-Man)]-Thr-[protein] + UDP-alpha-D-xylose = 3-O-[beta-D-Xyl-(1-&gt;4)-Rib-ol-P-Rib-ol-P-3-beta-D-GalNAc-(1-&gt;3)-beta-D-GlcNAc-(1-&gt;4)-(O-6-P-alpha-D-Man)]-Thr-[protein] + UDP + H(+). It functions in the pathway protein modification; protein glycosylation. Functionally, acts as a UDP-D-xylose:ribitol-5-phosphate beta1,4-xylosyltransferase, which catalyzes the transfer of UDP-D-xylose to ribitol 5-phosphate (Rbo5P) to form the Xylbeta1-4Rbo5P linkage on O-mannosyl glycan. Participates in the biosynthesis of the phosphorylated O-mannosyl trisaccharide (N-acetylgalactosamine-beta-3-N-acetylglucosamine-beta-4-(phosphate-6-)mannose), a carbohydrate structure present in alpha-dystroglycan (DAG1), which is required for binding laminin G-like domain-containing extracellular proteins with high affinity. This Homo sapiens (Human) protein is Ribitol-5-phosphate xylosyltransferase 1.